We begin with the raw amino-acid sequence, 335 residues long: Solute-binding protein Veis_3954 (335 aa).

The N-terminal stretch at 1 to 34 (MPSTRPLPRPSSRSLRRLALGLGLAFGLGATAAA) is a signal peptide. (R)-pantoate is bound by residues glutamine 50, glutamate 82, 155 to 158 (NGFR), arginine 179, and asparagine 219.

This sequence belongs to the bacterial solute-binding protein 7 family. In terms of assembly, the complex is comprised of an extracytoplasmic solute-binding protein and a heteromeric permease formed by two transmembrane proteins.

It is found in the periplasm. Its function is as follows. Solute-binding protein that binds (R)-pantoate and D-erythronate (in vitro). Probably part of a tripartite ATP-independent periplasmic (TRAP) transport system that mediates solute transport into the cytoplasm. This Verminephrobacter eiseniae (strain EF01-2) protein is Solute-binding protein Veis_3954.